The sequence spans 126 residues: uncharacterized protein (126 aa).

The helical transmembrane segment at 5–25 threads the bilayer; that stretch reads LIQHITSIFVFSFFFLFFFFS.

The protein resides in the membrane. This is an uncharacterized protein from Saccharomyces cerevisiae (strain ATCC 204508 / S288c) (Baker's yeast).